A 264-amino-acid chain; its full sequence is Movement protein (264 aa).

The disordered stretch occupies residues arginine 211 to tyrosine 264. Positions lysine 237–aspartate 247 are enriched in basic and acidic residues.

Belongs to the tobamovirus movement protein family. As to quaternary structure, binds to host RBCS at the plasmodesmata; this interaction seems required for viral systemic movement. In resistant plants, interacts with host MBP2C at host microtubules; this interaction prevents virus cell to cell movement. In resistant plants, interacts with host resistance (R) protein (e.g. tomato ToMV resistance protein TM-2(2), AC Q71BG9) at the host plasma membrane; this interaction triggers host defense responses leading to programmed cell death.

It is found in the host cytoplasm. The protein resides in the host cytoskeleton. Its subcellular location is the host cell junction. It localises to the host plasmodesma. In terms of biological role, transports viral genome to neighboring plant cells directly through plasmosdesmata, without any budding. The movement protein allows efficient cell to cell propagation, by bypassing the host cell wall barrier. Forms a ribonucleoprotein complex with viral RNA. Binds microtubules and modulates microtubule stability. Can bind double-stranded DNA. Triggers host hypersensitive defense reaction in incompatible plants harboring resistance (R) proteins. This Tomato mosaic virus (strain S-1) (ToMV) protein is Movement protein (MP).